Reading from the N-terminus, the 187-residue chain is ATP synthase subunit b, chloroplastic (187 aa).

Residues 34 to 56 (IINLSVVLGLVFTLGRNFLISLL) traverse the membrane as a helical segment.

It belongs to the ATPase B chain family. In terms of assembly, F-type ATPases have 2 components, F(1) - the catalytic core - and F(0) - the membrane proton channel. F(1) has five subunits: alpha(3), beta(3), gamma(1), delta(1), epsilon(1). F(0) has four main subunits: a(1), b(1), b'(1) and c(10-14). The alpha and beta chains form an alternating ring which encloses part of the gamma chain. F(1) is attached to F(0) by a central stalk formed by the gamma and epsilon chains, while a peripheral stalk is formed by the delta, b and b' chains.

It localises to the plastid. The protein resides in the chloroplast thylakoid membrane. Functionally, f(1)F(0) ATP synthase produces ATP from ADP in the presence of a proton or sodium gradient. F-type ATPases consist of two structural domains, F(1) containing the extramembraneous catalytic core and F(0) containing the membrane proton channel, linked together by a central stalk and a peripheral stalk. During catalysis, ATP synthesis in the catalytic domain of F(1) is coupled via a rotary mechanism of the central stalk subunits to proton translocation. Component of the F(0) channel, it forms part of the peripheral stalk, linking F(1) to F(0). In Pleurastrum terricola (Filamentous green alga), this protein is ATP synthase subunit b, chloroplastic.